An 863-amino-acid polypeptide reads, in one-letter code: Eukaryotic translation initiation factor 3 subunit C (863 aa).

The interval 1 to 92 is disordered; the sequence is MSRFFRGGDD…VKSAKDKRFD (92 aa). Over residues 16–53 the composition is skewed to acidic residues; the sequence is SSDEEELYSTSEEEEEEDQDQEESSEEEDEEESSDEDE. A compositionally biased stretch (basic and acidic residues) spans 79-92; it reads GATKVKSAKDKRFD. Residues 604 to 778 form the PCI domain; that stretch reads FHMHINLELL…KTVIFRKGVE (175 aa). Positions 808–863 are disordered; sequence TQGSANAFSRKDGRQGGQRGGGQRSGRGGARAGGNAQRQAGGTQFTGGALGAAVRG. Over residues 822 to 839 the composition is skewed to gly residues; the sequence is QGGQRGGGQRSGRGGARA. Over residues 840–850 the composition is skewed to low complexity; that stretch reads GGNAQRQAGGT.

Belongs to the eIF-3 subunit C family. As to quaternary structure, component of the eukaryotic translation initiation factor 3 (eIF-3) complex.

The protein localises to the cytoplasm. In terms of biological role, component of the eukaryotic translation initiation factor 3 (eIF-3) complex, which is involved in protein synthesis of a specialized repertoire of mRNAs and, together with other initiation factors, stimulates binding of mRNA and methionyl-tRNAi to the 40S ribosome. The eIF-3 complex specifically targets and initiates translation of a subset of mRNAs involved in cell proliferation. This Chaetomium globosum (strain ATCC 6205 / CBS 148.51 / DSM 1962 / NBRC 6347 / NRRL 1970) (Soil fungus) protein is Eukaryotic translation initiation factor 3 subunit C.